Here is a 61-residue protein sequence, read N- to C-terminus: Sec-independent protein translocase protein TatA (61 aa).

A helical transmembrane segment spans residues 1–21 (MFGIGMPELIVILVIVLVVFG).

Belongs to the TatA/E family. The Tat system comprises two distinct complexes: a TatABC complex, containing multiple copies of TatA, TatB and TatC subunits, and a separate TatA complex, containing only TatA subunits. Substrates initially bind to the TatABC complex, which probably triggers association of the separate TatA complex to form the active translocon.

It is found in the cell inner membrane. In terms of biological role, part of the twin-arginine translocation (Tat) system that transports large folded proteins containing a characteristic twin-arginine motif in their signal peptide across membranes. TatA could form the protein-conducting channel of the Tat system. In Geobacter metallireducens (strain ATCC 53774 / DSM 7210 / GS-15), this protein is Sec-independent protein translocase protein TatA.